We begin with the raw amino-acid sequence, 424 residues long: DNA repair protein Rad60 (424 aa).

Tyrosine 26 bears the Phosphotyrosine mark. Phosphoserine occurs at positions 32 and 34. The segment at 45–177 (LPKKSTKTGK…LTTTTSNSAS (133 aa)) is disordered. The span at 48–57 (KSTKTGKRKN) shows a compositional bias: basic residues. Basic and acidic residues predominate over residues 77 to 93 (QAEHKAVEPEEDMRTER). Serine 96 bears the Phosphoserine mark. Residues 104-123 (EMEKKNGQQSDVEKHAKEND) show a composition bias toward basic and acidic residues. The segment covering 156–166 (KPKKRGQKKRT) has biased composition (basic residues). Positions 167–177 (SLTTTTSNSAS) are enriched in low complexity.

In terms of assembly, forms a complex with dgrn; likely required for localization to the nuclear periphery. Interacts with the SMC5-SMC6 complex members SMC5 and SMC6/jnj following ionizing radiation (IR) to induce DNA damage. Interaction between the SMC5-SMC6 complex and the dgrn-Rad60 complex, may stabilize the association of heterochromatic DSBs with the nuclear periphery.

It is found in the nucleus. Its subcellular location is the nucleoplasm. Its function is as follows. Required for repair of DNA double strand breaks which occur during replication or are induced by ionizing radiation (IR). Functions with dgrn and downstream of the SMC5-SMC6 complex to regulate strand break repair. Likely functions by stabilizing the association of heterochromatic double strand breaks (DSBs) with the nuclear periphery as part of the homologous recombination (HR) repair process. The sequence is that of DNA repair protein Rad60 from Drosophila melanogaster (Fruit fly).